The sequence spans 533 residues: uncharacterized protein (533 aa).

An N-terminal signal peptide occupies residues 1–21 (MVKVWKIGFGVFLPTALLFSA). Cys22 carries N-palmitoyl cysteine lipidation. Cys22 is lipidated: S-diacylglycerol cysteine. The segment at 91–111 (LSKNKEGQTASQTRSSSEQTT) is disordered. Residues 97–111 (GQTASQTRSSSEQTT) are compositionally biased toward polar residues.

It belongs to the MG067/MG068/MG395 family.

It is found in the cell membrane. This is an uncharacterized protein from Mycoplasma pneumoniae (strain ATCC 29342 / M129 / Subtype 1) (Mycoplasmoides pneumoniae).